The chain runs to 356 residues: UDP-N-acetylglucosamine--N-acetylmuramyl-(pentapeptide) pyrophosphoryl-undecaprenol N-acetylglucosamine transferase (356 aa).

UDP-N-acetyl-alpha-D-glucosamine is bound by residues 15 to 17 (TGG), asparagine 127, arginine 163, serine 191, isoleucine 244, 263 to 268 (ALTVSE), and glutamine 288.

It belongs to the glycosyltransferase 28 family. MurG subfamily.

Its subcellular location is the cell inner membrane. It carries out the reaction di-trans,octa-cis-undecaprenyl diphospho-N-acetyl-alpha-D-muramoyl-L-alanyl-D-glutamyl-meso-2,6-diaminopimeloyl-D-alanyl-D-alanine + UDP-N-acetyl-alpha-D-glucosamine = di-trans,octa-cis-undecaprenyl diphospho-[N-acetyl-alpha-D-glucosaminyl-(1-&gt;4)]-N-acetyl-alpha-D-muramoyl-L-alanyl-D-glutamyl-meso-2,6-diaminopimeloyl-D-alanyl-D-alanine + UDP + H(+). It functions in the pathway cell wall biogenesis; peptidoglycan biosynthesis. Its function is as follows. Cell wall formation. Catalyzes the transfer of a GlcNAc subunit on undecaprenyl-pyrophosphoryl-MurNAc-pentapeptide (lipid intermediate I) to form undecaprenyl-pyrophosphoryl-MurNAc-(pentapeptide)GlcNAc (lipid intermediate II). The sequence is that of UDP-N-acetylglucosamine--N-acetylmuramyl-(pentapeptide) pyrophosphoryl-undecaprenol N-acetylglucosamine transferase from Klebsiella pneumoniae subsp. pneumoniae (strain ATCC 700721 / MGH 78578).